We begin with the raw amino-acid sequence, 344 residues long: F17d-G fimbrial adhesin (344 aa).

The N-terminal stretch at 1-22 (MTNFYKVFLAVFILVCCNISQA) is a signal peptide. The tract at residues 23–199 (AVSFIGSTEN…SLNPFTLNDT (177 aa)) is receptor-binding lectin domain. A carbohydrate-binding positions include 65–66 (AN), 110–111 (DT), and 139–142 (STQG). Cys75 and Cys132 are oxidised to a cystine. Residues 200–344 (VTSCRLLTPS…GISTFTFSYQ (145 aa)) are fimbrillin-binding domain. The disordered stretch occupies residues 288 to 308 (LKFGPDSPVKGNENQWQLSTG). Residues 299–308 (NENQWQLSTG) show a composition bias toward polar residues.

Belongs to the fimbrial protein family.

It is found in the fimbrium. In terms of biological role, essential fimbrial adhesion factor that mediates binding to N-acetylglucosamine-containing receptors in the host intestinal microvilli, leading to colonization of the intestinal tissue, and diarrhea or septicemia. Also confers adhesiveness to laminin and basement membranes. In Escherichia coli, this protein is F17d-G fimbrial adhesin (f17dG).